Consider the following 381-residue polypeptide: Cytosolic acyl coenzyme A thioester hydrolase (381 aa).

The 119-residue stretch at 51 to 169 folds into the HotDog ACOT-type 1 domain; that stretch reads LGHCVTMGRI…TLWYVPLSLK (119 aa). N67 is a catalytic residue. Residues K169 and K199 each carry the N6-acetyllysine modification. A HotDog ACOT-type 2 domain is found at 225-339; it reads SYSQSSLIHL…FFTYVSLNQE (115 aa). D256 is an active-site residue. K284 carries the N6-acetyllysine modification. The segment at 342–381 is disordered; it reads PMPVPQLVPETEDEKKRFEEGKGRYLQMKAKRQGHTEPQP. Residues 354 to 364 show a composition bias toward basic and acidic residues; it reads DEKKRFEEGKG.

As to quaternary structure, homohexamer. Widely expressed with highest levels in brain. High levels also found in thymus, large intestine and testis. Negligible in muscle and adipose tissue. In the central and peripheral nervous systems, displays a predominantly neuronal localization with highest expression in cell bodies and neurites.

It is found in the cytoplasm. Its subcellular location is the cytosol. The catalysed reaction is hexadecanoyl-CoA + H2O = hexadecanoate + CoA + H(+). It catalyses the reaction dodecanoyl-CoA + H2O = dodecanoate + CoA + H(+). It carries out the reaction tetradecanoyl-CoA + H2O = tetradecanoate + CoA + H(+). The enzyme catalyses decanoyl-CoA + H2O = decanoate + CoA + H(+). The catalysed reaction is octanoyl-CoA + H2O = octanoate + CoA + H(+). It catalyses the reaction octadecanoyl-CoA + H2O = octadecanoate + CoA + H(+). It carries out the reaction (9Z)-octadecenoyl-CoA + H2O = (9Z)-octadecenoate + CoA + H(+). Its pathway is lipid metabolism; fatty acid metabolism. Catalyzes the hydrolysis of acyl-CoAs into free fatty acids and coenzyme A (CoASH), regulating their respective intracellular levels. Preferentially hydrolyzes palmitoyl-CoA, but has a broad specificity acting on other fatty acyl-CoAs with chain-lengths of C8-C18. May play an important physiological function in brain. The sequence is that of Cytosolic acyl coenzyme A thioester hydrolase (Acot7) from Mus musculus (Mouse).